The following is a 315-amino-acid chain: Protoheme IX farnesyltransferase (315 aa).

The next 9 membrane-spanning stretches (helical) occupy residues 32 to 52 (VMSL…GHMN), 53 to 73 (PVLA…SGAL), 93 to 113 (IPAG…LSAF), 120 to 140 (LMVN…YAVI), 153 to 173 (IVIG…AATG), 180 to 200 (LVLF…LSLF), 226 to 246 (ALFY…MGFA), 249 to 269 (FYGV…WRLW), and 295 to 315 (IFAV…FGVF).

It belongs to the UbiA prenyltransferase family. Protoheme IX farnesyltransferase subfamily.

The protein localises to the cell inner membrane. It catalyses the reaction heme b + (2E,6E)-farnesyl diphosphate + H2O = Fe(II)-heme o + diphosphate. It participates in porphyrin-containing compound metabolism; heme O biosynthesis; heme O from protoheme: step 1/1. Its function is as follows. Converts heme B (protoheme IX) to heme O by substitution of the vinyl group on carbon 2 of heme B porphyrin ring with a hydroxyethyl farnesyl side group. This Brucella canis (strain ATCC 23365 / NCTC 10854 / RM-666) protein is Protoheme IX farnesyltransferase.